A 149-amino-acid chain; its full sequence is D-aminoacyl-tRNA deacylase (149 aa).

The Gly-cisPro motif, important for rejection of L-amino acids signature appears at 137–138 (GP).

The protein belongs to the DTD family. Homodimer.

It is found in the cytoplasm. The enzyme catalyses glycyl-tRNA(Ala) + H2O = tRNA(Ala) + glycine + H(+). The catalysed reaction is a D-aminoacyl-tRNA + H2O = a tRNA + a D-alpha-amino acid + H(+). An aminoacyl-tRNA editing enzyme that deacylates mischarged D-aminoacyl-tRNAs. Also deacylates mischarged glycyl-tRNA(Ala), protecting cells against glycine mischarging by AlaRS. Acts via tRNA-based rather than protein-based catalysis; rejects L-amino acids rather than detecting D-amino acids in the active site. By recycling D-aminoacyl-tRNA to D-amino acids and free tRNA molecules, this enzyme counteracts the toxicity associated with the formation of D-aminoacyl-tRNA entities in vivo and helps enforce protein L-homochirality. This Clostridium botulinum (strain Kyoto / Type A2) protein is D-aminoacyl-tRNA deacylase.